The primary structure comprises 98 residues: NADH-ubiquinone oxidoreductase chain 4L (98 aa).

3 helical membrane-spanning segments follow: residues 1 to 21, 29 to 49, and 61 to 81; these read MSLI…GLLM, SLLC…MMVL, and IILL…LVMI.

This sequence belongs to the complex I subunit 4L family. Core subunit of respiratory chain NADH dehydrogenase (Complex I) which is composed of 45 different subunits.

Its subcellular location is the mitochondrion inner membrane. It catalyses the reaction a ubiquinone + NADH + 5 H(+)(in) = a ubiquinol + NAD(+) + 4 H(+)(out). Core subunit of the mitochondrial membrane respiratory chain NADH dehydrogenase (Complex I) which catalyzes electron transfer from NADH through the respiratory chain, using ubiquinone as an electron acceptor. Part of the enzyme membrane arm which is embedded in the lipid bilayer and involved in proton translocation. The protein is NADH-ubiquinone oxidoreductase chain 4L (MT-ND4L) of Ceratotherium simum (White rhinoceros).